The following is a 529-amino-acid chain: Acid-sensing ion channel 1C (529 aa).

The Cytoplasmic segment spans residues 1 to 51 (MTAMKGDSEDSIESMRPSNLQVFANNSTLHGMSHIFAYGHMTFRRFLWTLS). A helical transmembrane segment spans residues 52–68 (FMGSLGLLMYVCMDRVY). Topologically, residues 69-427 (YYFEFPHVTK…EKIEQKKAYE (359 aa)) are extracellular. N-linked (GlcNAc...) asparagine glycans are attached at residues N86, N155, and N161. Disulfide bonds link C95-C196, C174-C181, C292-C367, C310-C363, C314-C361, C323-C345, and C325-C337. N185 carries an N-linked (GlcNAc...) asparagine glycan. N-linked (GlcNAc...) asparagine glycosylation is found at N368 and N395. The chain crosses the membrane as a discontinuously helical span at residues 428–458 (VAGLLGDIGGQMGLFIGASVLTILEIFDYLY). Positions 444–446 (GAS) match the GAS motif; ion selectivity filter motif. Topologically, residues 459 to 529 (EVLKDKILGS…PFVVGSNSGK (71 aa)) are cytoplasmic.

The protein belongs to the amiloride-sensitive sodium channel (TC 1.A.6) family. ASIC1 subfamily. Homotrimer. Heterotrimer; with other ASIC proteins producing channel with different properties. Interacts with asic1a. As to expression, expressed in central nervous system.

Its subcellular location is the cell membrane. It localises to the postsynaptic cell membrane. The protein localises to the cell projection. The protein resides in the dendrite. It catalyses the reaction Na(+)(in) = Na(+)(out). The enzyme catalyses K(+)(in) = K(+)(out). It carries out the reaction Li(+)(in) = Li(+)(out). The catalysed reaction is Ca(2+)(in) = Ca(2+)(out). With respect to regulation, inhibited by the diuretic drug amiloride. In terms of biological role, forms voltage-independent, pH-gated trimeric sodium channels that act as postsynaptic excitatory receptors in the nervous system, playing a crucial role in regulating synaptic plasticity, learning, and memory. Upon extracellular pH drop this channel elicits transient, fast activating, and completely desensitizing inward currents. Displays high selectivity for sodium ions but can also permit the permeation of other cations. This chain is Acid-sensing ion channel 1C, found in Danio rerio (Zebrafish).